Reading from the N-terminus, the 257-residue chain is Protein MoaE (257 aa).

NAD(+) is bound at residue 6-29 (VITGGGTGIGAACARLMHPAGERV). The tract at residues 75–96 (LMSSSAAPAGWATAPPPRPATA) is disordered. Ser-132 contributes to the substrate binding site. Tyr-145 acts as the Proton acceptor in catalysis.

Belongs to the short-chain dehydrogenases/reductases (SDR) family.

In terms of biological role, might catalyze the conversion of monoamine compounds or their metabolites. The polypeptide is Protein MoaE (moaE) (Klebsiella aerogenes (Enterobacter aerogenes)).